The chain runs to 371 residues: MSL complex subunit 3B (371 aa).

Disordered regions lie at residues 1 to 47 and 160 to 230; these read MATL…DERA and EERA…PQAK. Residues 8-47 are compositionally biased toward basic and acidic residues; sequence PKDDGEGKDEGGSDRGDGDSKPKGKKEVEPHTRREADERA. An MRG domain is found at 44–367; the sequence is DERAMRIPIP…CEAHYSSKNP (324 aa). Positions 183 to 193 are enriched in low complexity; sequence SESQAVAGPAA. Over residues 206-216 the composition is skewed to basic residues; that stretch reads APRRSTRHSTH.

The protein resides in the nucleus. Probable non-catalytic component of the MSL histone acetyltransferase complex, a multiprotein complex that mediates the majority of histone H4 acetylation at 'Lys-16' (H4K16ac), an epigenetic mark that prevents chromatin compaction. In Mus musculus (Mouse), this protein is MSL complex subunit 3B.